The following is a 291-amino-acid chain: Mitochondrial fission factor (291 aa).

Topologically, residues 1 to 271 (MAEISRIQYE…ENKERAKREM (271 aa)) are cytoplasmic. Threonine 89 bears the Phosphothreonine mark. The interval 106–134 (LERPLPTPQSEESRAVGRLKRERSMSENA) is disordered. 3 positions are modified to phosphoserine: serine 129, serine 131, and serine 146. A Phosphothreonine modification is found at threonine 149. Serine 151, serine 178, serine 182, and serine 244 each carry phosphoserine. Residues 240 to 271 (VDAASLRRQIIKLNRRLQLLEEENKERAKREM) adopt a coiled-coil conformation. Residues 272–289 (VMYSITVAFWLLNSWLWF) form a helical; Anchor for type IV membrane protein membrane-spanning segment. Over 290-291 (RR) the chain is Mitochondrial intermembrane.

The protein belongs to the Tango11 family. In terms of assembly, homodimer. Interacts with DNM1L. Interacts with C11orf65/MFI; the interaction inhibits MFF interaction with DNM1L.

Its subcellular location is the mitochondrion outer membrane. It localises to the peroxisome. It is found in the cytoplasmic vesicle. The protein localises to the secretory vesicle. The protein resides in the synaptic vesicle. Functionally, plays a role in mitochondrial and peroxisomal fission. Promotes the recruitment and association of the fission mediator dynamin-related protein 1 (DNM1L) to the mitochondrial surface. May be involved in regulation of synaptic vesicle membrane dynamics by recruitment of DNM1L to clathrin-containing vesicles. This chain is Mitochondrial fission factor (Mff), found in Mus musculus (Mouse).